The following is a 139-amino-acid chain: S-adenosylmethionine decarboxylase proenzyme (139 aa).

Ser63 functions as the Schiff-base intermediate with substrate; via pyruvic acid in the catalytic mechanism. The residue at position 63 (Ser63) is a Pyruvic acid (Ser); by autocatalysis. His68 serves as the catalytic Proton acceptor; for processing activity. Cys83 functions as the Proton donor; for catalytic activity in the catalytic mechanism.

Belongs to the prokaryotic AdoMetDC family. Type 1 subfamily. Heterotetramer of two alpha and two beta chains arranged as a dimer of alpha/beta heterodimers. Pyruvate serves as cofactor. Is synthesized initially as an inactive proenzyme. Formation of the active enzyme involves a self-maturation process in which the active site pyruvoyl group is generated from an internal serine residue via an autocatalytic post-translational modification. Two non-identical subunits are generated from the proenzyme in this reaction, and the pyruvate is formed at the N-terminus of the alpha chain, which is derived from the carboxyl end of the proenzyme. The post-translation cleavage follows an unusual pathway, termed non-hydrolytic serinolysis, in which the side chain hydroxyl group of the serine supplies its oxygen atom to form the C-terminus of the beta chain, while the remainder of the serine residue undergoes an oxidative deamination to produce ammonia and the pyruvoyl group blocking the N-terminus of the alpha chain.

The enzyme catalyses S-adenosyl-L-methionine + H(+) = S-adenosyl 3-(methylsulfanyl)propylamine + CO2. It functions in the pathway amine and polyamine biosynthesis; S-adenosylmethioninamine biosynthesis; S-adenosylmethioninamine from S-adenosyl-L-methionine: step 1/1. Functionally, catalyzes the decarboxylation of S-adenosylmethionine to S-adenosylmethioninamine (dcAdoMet), the propylamine donor required for the synthesis of the polyamines spermine and spermidine from the diamine putrescine. The polypeptide is S-adenosylmethionine decarboxylase proenzyme (Pyrococcus furiosus (strain ATCC 43587 / DSM 3638 / JCM 8422 / Vc1)).